Consider the following 189-residue polypeptide: NADH-quinone oxidoreductase subunit B (189 aa).

Residues cysteine 39, cysteine 40, cysteine 104, and cysteine 135 each coordinate [4Fe-4S] cluster.

It belongs to the complex I 20 kDa subunit family. NDH-1 is composed of 14 different subunits. Subunits NuoB, C, D, E, F, and G constitute the peripheral sector of the complex. [4Fe-4S] cluster serves as cofactor.

It localises to the cell inner membrane. It catalyses the reaction a quinone + NADH + 5 H(+)(in) = a quinol + NAD(+) + 4 H(+)(out). Its function is as follows. NDH-1 shuttles electrons from NADH, via FMN and iron-sulfur (Fe-S) centers, to quinones in the respiratory chain. The immediate electron acceptor for the enzyme in this species is believed to be a menaquinone. Couples the redox reaction to proton translocation (for every two electrons transferred, four hydrogen ions are translocated across the cytoplasmic membrane), and thus conserves the redox energy in a proton gradient. The protein is NADH-quinone oxidoreductase subunit B of Chlorobium luteolum (strain DSM 273 / BCRC 81028 / 2530) (Pelodictyon luteolum).